The chain runs to 364 residues: Peptide chain release factor 1 (364 aa).

At Gln230 the chain carries N5-methylglutamine.

This sequence belongs to the prokaryotic/mitochondrial release factor family. Methylated by PrmC. Methylation increases the termination efficiency of RF1.

Its subcellular location is the cytoplasm. Peptide chain release factor 1 directs the termination of translation in response to the peptide chain termination codons UAG and UAA. The polypeptide is Peptide chain release factor 1 (Acidothermus cellulolyticus (strain ATCC 43068 / DSM 8971 / 11B)).